The primary structure comprises 2492 residues: Talin-A (2492 aa).

The 282-residue stretch at 84–365 (RPQKFKLLDG…GYIEIIMKAR (282 aa)) folds into the FERM domain. Positions 2250–2492 (EEDNVLEDLE…NSRKQNYNKN (243 aa)) constitute an I/LWEQ domain.

It is found in the cytoplasm. Its subcellular location is the cytoskeleton. The protein resides in the cell cortex. Functionally, actin-binding protein that may be involved in the control of cell motility and chemotaxis. The chain is Talin-A (talA) from Dictyostelium discoideum (Social amoeba).